We begin with the raw amino-acid sequence, 325 residues long: Putative [LysW]-lysine/[LysW]-ornithine hydrolase (325 aa).

A Zn(2+)-binding site is contributed by His66. Asp68 is an active-site residue. Residue Asp90 participates in Zn(2+) binding. Glu117 functions as the Proton acceptor in the catalytic mechanism. Zn(2+) contacts are provided by Glu118, Glu139, and His297.

Belongs to the peptidase M20A family. LysK subfamily. The cofactor is Zn(2+). Co(2+) serves as cofactor.

The protein resides in the cytoplasm. The enzyme catalyses [amino-group carrier protein]-C-terminal-gamma-(L-lysyl)-L-glutamate + H2O = [amino-group carrier protein]-C-terminal-L-glutamate + L-lysine. The catalysed reaction is [amino-group carrier protein]-C-terminal-gamma-(L-ornithyl)-L-glutamate + H2O = [amino-group carrier protein]-C-terminal-L-glutamate + L-ornithine. It participates in amino-acid biosynthesis; L-lysine biosynthesis via AAA pathway; L-lysine from L-alpha-aminoadipate (Thermus route): step 5/5. Its pathway is amino-acid biosynthesis; L-arginine biosynthesis. Catalyzes the release of L-lysine from [LysW]-gamma-L-lysine and the release of L-ornithine from [LysW]-L-ornithine. This Pyrococcus horikoshii (strain ATCC 700860 / DSM 12428 / JCM 9974 / NBRC 100139 / OT-3) protein is Putative [LysW]-lysine/[LysW]-ornithine hydrolase.